We begin with the raw amino-acid sequence, 531 residues long: Glucose-6-phosphate exchanger SLC37A1 (531 aa).

A helical transmembrane segment spans residues Gln-18 to Ser-38. A disordered region spans residues Cys-53–His-72. Helical transmembrane passes span Gly-100–Ile-120, Tyr-129–Phe-149, Phe-157–Val-177, Ile-192–Trp-214, Ser-222–Ile-242, Leu-332–Ile-352, Gly-364–Ile-384, Ala-392–Val-412, Ala-419–Thr-439, Ala-464–Ile-484, and Gly-488–Val-508.

The protein belongs to the major facilitator superfamily. Organophosphate:Pi antiporter (OPA) (TC 2.A.1.4) family.

It is found in the endoplasmic reticulum membrane. The enzyme catalyses D-glucose 6-phosphate(in) + phosphate(out) = D-glucose 6-phosphate(out) + phosphate(in). Its activity is regulated as follows. Inhibited by vanadate but not by chlorogenic acid. Inorganic phosphate and glucose-6-phosphate antiporter. May transport cytoplasmic glucose-6-phosphate into the lumen of the endoplasmic reticulum and translocate inorganic phosphate into the opposite direction. Independent of a lumenal glucose-6-phosphatase. May not play a role in homeostatic regulation of blood glucose levels. This chain is Glucose-6-phosphate exchanger SLC37A1, found in Mus musculus (Mouse).